A 320-amino-acid polypeptide reads, in one-letter code: MNLDLTPLAWRLAGTPLAAWANDVQQQLDAKLAIGHGDLPRWRRAVDALPTLMPTQIELRECFRLAAPCDEATRQATREALMGLSPWRKGPFEVFGVHVDTEWRSDWKWARVAPHLDLAGKRILDVGCGNGYYMWRMLGAGADSVVGVDPNWLFFCQFHAMKRYLPELPAWHLPFALEELPPKLEGFETVFSMGVLYHRRSPVDHLLDLKDCLVRGGELVLETLVVEGDENTALVPEDRYAQMRNVWFLPSVPALERWLRRAGFVDVRCVDVSVTSVEEQRSTYWMRYQSLPDFLDPQDHGRTVEGLPAPMRAVLLARKP.

Carboxy-S-adenosyl-L-methionine is bound by residues lysine 89, tryptophan 103, lysine 108, glycine 127, 177–178 (LE), methionine 193, tyrosine 197, and arginine 312.

The protein belongs to the class I-like SAM-binding methyltransferase superfamily. CmoB family. As to quaternary structure, homotetramer.

The enzyme catalyses carboxy-S-adenosyl-L-methionine + 5-hydroxyuridine(34) in tRNA = 5-carboxymethoxyuridine(34) in tRNA + S-adenosyl-L-homocysteine + H(+). Its function is as follows. Catalyzes carboxymethyl transfer from carboxy-S-adenosyl-L-methionine (Cx-SAM) to 5-hydroxyuridine (ho5U) to form 5-carboxymethoxyuridine (cmo5U) at position 34 in tRNAs. The chain is tRNA U34 carboxymethyltransferase from Stutzerimonas stutzeri (strain A1501) (Pseudomonas stutzeri).